Reading from the N-terminus, the 857-residue chain is Leucine--tRNA ligase (857 aa).

Positions 42-52 (PYPSGNLHMGH) match the 'HIGH' region motif. Positions 615 to 619 (KMSKS) match the 'KMSKS' region motif. Residue lysine 618 coordinates ATP.

It belongs to the class-I aminoacyl-tRNA synthetase family.

It localises to the cytoplasm. The enzyme catalyses tRNA(Leu) + L-leucine + ATP = L-leucyl-tRNA(Leu) + AMP + diphosphate. This chain is Leucine--tRNA ligase, found in Thermosynechococcus vestitus (strain NIES-2133 / IAM M-273 / BP-1).